Here is a 467-residue protein sequence, read N- to C-terminus: 3-isopropylmalate dehydratase large subunit (467 aa).

Positions 349, 408, and 411 each coordinate [4Fe-4S] cluster.

It belongs to the aconitase/IPM isomerase family. LeuC type 1 subfamily. In terms of assembly, heterodimer of LeuC and LeuD. Requires [4Fe-4S] cluster as cofactor.

It carries out the reaction (2R,3S)-3-isopropylmalate = (2S)-2-isopropylmalate. It functions in the pathway amino-acid biosynthesis; L-leucine biosynthesis; L-leucine from 3-methyl-2-oxobutanoate: step 2/4. In terms of biological role, catalyzes the isomerization between 2-isopropylmalate and 3-isopropylmalate, via the formation of 2-isopropylmaleate. This chain is 3-isopropylmalate dehydratase large subunit, found in Dinoroseobacter shibae (strain DSM 16493 / NCIMB 14021 / DFL 12).